The sequence spans 113 residues: UPF0251 protein Teth514_1147 (113 aa).

The protein belongs to the UPF0251 family.

The polypeptide is UPF0251 protein Teth514_1147 (Thermoanaerobacter sp. (strain X514)).